Consider the following 171-residue polypeptide: Large ribosomal subunit protein uL10 (171 aa).

This sequence belongs to the universal ribosomal protein uL10 family. In terms of assembly, part of the ribosomal stalk of the 50S ribosomal subunit. The N-terminus interacts with L11 and the large rRNA to form the base of the stalk. The C-terminus forms an elongated spine to which L12 dimers bind in a sequential fashion forming a multimeric L10(L12)X complex.

Functionally, forms part of the ribosomal stalk, playing a central role in the interaction of the ribosome with GTP-bound translation factors. This Maricaulis maris (strain MCS10) (Caulobacter maris) protein is Large ribosomal subunit protein uL10.